An 834-amino-acid polypeptide reads, in one-letter code: Structure-specific endonuclease subunit SLX4 (834 aa).

Disordered regions lie at residues 80–105 (RVPR…KTTT), 272–307 (TVPA…QKGK), 332–372 (QNVA…GRPV), 401–421 (GYPE…SNSA), 603–649 (ESKP…AKAL), and 720–740 (ATPN…SIEP). The span at 279-295 (PTESSTTEDVQGSSSKQ) shows a compositional bias: polar residues. A compositionally biased stretch (basic residues) spans 296 to 305 (QRVKAKKPQK). 2 stretches are compositionally biased toward polar residues: residues 345 to 366 (SNRP…TLKN) and 412 to 421 (DTQNSPSNSA). Over residues 611–630 (DDARKNGFRKENHSDVRVRP) the composition is skewed to basic and acidic residues. Residues 729–740 (QGSSSASFSIEP) show a composition bias toward low complexity.

The protein belongs to the SLX4 family. Forms a heterodimer with SLX1. In terms of processing, phosphorylated in response to DNA damage.

It localises to the nucleus. Regulatory subunit of the SLX1-SLX4 structure-specific endonuclease that resolves DNA secondary structures generated during DNA repair and recombination. Has endonuclease activity towards branched DNA substrates, introducing single-strand cuts in duplex DNA close to junctions with ss-DNA. In Ajellomyces capsulatus (strain NAm1 / WU24) (Darling's disease fungus), this protein is Structure-specific endonuclease subunit SLX4.